Consider the following 341-residue polypeptide: Eukaryotic translation initiation factor 2 subunit 1 (341 aa).

Residues 18 to 89 (NELVMVRIES…DKGYIDLSKR (72 aa)) form the S1 motif domain. The interval 301–341 (LMEQLEVENQDGDGEEHEDDDDDDDDEEEEEKPKEKKSSRK) is disordered. Residues 303 to 330 (EQLEVENQDGDGEEHEDDDDDDDDEEEE) show a composition bias toward acidic residues. The span at 331–341 (EKPKEKKSSRK) shows a compositional bias: basic and acidic residues.

Belongs to the eIF-2-alpha family. In terms of assembly, eukaryotic translation initiation factor 2 eIF2 is a heterotrimeric complex composed of an alpha, a beta and a gamma subunit.

The protein localises to the cytoplasm. The protein resides in the cytosol. Functionally, eIF-2 functions in the early steps of protein synthesis by forming a ternary complex with GTP and initiator tRNA. This complex binds to a 40S ribosomal subunit, followed by mRNA binding to form a 43S pre-initiation complex. Junction of the 60S ribosomal subunit to form the 80S initiation complex is preceded by hydrolysis of the GTP bound to eIF-2 and release of an eIF-2-GDP binary complex. In order for eIF-2 to recycle and catalyze another round of initiation, the GDP bound to eIF-2 must exchange with GTP by way of a reaction catalyzed by eIF2B. This is Eukaryotic translation initiation factor 2 subunit 1 (eif2s1) from Dictyostelium discoideum (Social amoeba).